The primary structure comprises 232 residues: Putative B3 domain-containing protein Os11g0242900 (232 aa).

Positions 1–51 (MTVELEKIAGSFFISKGWKTFVHRTGLLSGQYIRFQVLTPSKINVLLFDKK) form a DNA-binding region, TF-B3 1. Positions 92–121 (SHTSNKETSSDSRTESMTDIPSSSDNSGET) are disordered. A compositionally biased stretch (basic and acidic residues) spans 95 to 107 (SNKETSSDSRTES). Residues 108–121 (MTDIPSSSDNSGET) show a composition bias toward polar residues. The TF-B3 2 DNA-binding region spans 140 to 232 (DIKNYISIIG…PNVKITIDVL (93 aa)).

The protein resides in the nucleus. The sequence is that of Putative B3 domain-containing protein Os11g0242900 from Oryza sativa subsp. japonica (Rice).